The following is a 387-amino-acid chain: Patatin-08 (387 aa).

Positions 1 to 23 (MATTKSFLILIVMILATTSSTFA) are cleaved as a signal peptide. The 199-residue stretch at 32 to 230 (LSIDGGGIKG…TVADPALLSI (199 aa)) folds into the PNPLA domain. The GXGXXG signature appears at 36-41 (GGGIKG). The short motif at 75–79 (GTSTG) is the GXSXG element. The Nucleophile role is filled by serine 77. A glycan (N-linked (GlcNAc...) asparagine) is linked at asparagine 115. The Proton acceptor role is filled by aspartate 216. The DGA/G motif lies at 216 to 218 (DGA). Positions 361–385 (ETYEEALKRFAKLLSDRKKLRANKA) form a coiled coil.

This sequence belongs to the patatin family. Tuber.

Its subcellular location is the vacuole. In terms of biological role, probable lipolytic acyl hydrolase (LAH), an activity which is thought to be involved in the response of tubers to pathogens. This is Patatin-08 from Solanum tuberosum (Potato).